A 339-amino-acid chain; its full sequence is tRNA N6-adenosine threonylcarbamoyltransferase (339 aa).

2 residues coordinate Fe cation: H117 and H121. Substrate is bound by residues 140-144 (VVSGG), D173, G186, and N279. D307 lines the Fe cation pocket.

This sequence belongs to the KAE1 / TsaD family. The cofactor is Fe(2+).

It localises to the cytoplasm. The catalysed reaction is L-threonylcarbamoyladenylate + adenosine(37) in tRNA = N(6)-L-threonylcarbamoyladenosine(37) in tRNA + AMP + H(+). In terms of biological role, required for the formation of a threonylcarbamoyl group on adenosine at position 37 (t(6)A37) in tRNAs that read codons beginning with adenine. Is involved in the transfer of the threonylcarbamoyl moiety of threonylcarbamoyl-AMP (TC-AMP) to the N6 group of A37, together with TsaE and TsaB. TsaD likely plays a direct catalytic role in this reaction. The polypeptide is tRNA N6-adenosine threonylcarbamoyltransferase (Syntrophomonas wolfei subsp. wolfei (strain DSM 2245B / Goettingen)).